Here is a 523-residue protein sequence, read N- to C-terminus: Siroheme synthase (523 aa).

The segment at 1–203 (MNTFPLFFKL…GNENEAIAQL (203 aa)) is precorrin-2 dehydrogenase /sirohydrochlorin ferrochelatase. NAD(+) is bound by residues 22 to 23 (DV) and 43 to 44 (PS). Phosphoserine is present on S128. The segment at 231–523 (GEVYIVGAGP…DGGLEQLVID (293 aa)) is uroporphyrinogen-III C-methyltransferase. Residue P240 coordinates S-adenosyl-L-methionine. D263 functions as the Proton acceptor in the catalytic mechanism. K285 functions as the Proton donor in the catalytic mechanism. S-adenosyl-L-methionine is bound by residues 316 to 318 (GGD), I321, 346 to 347 (TA), M398, and A427.

This sequence in the N-terminal section; belongs to the precorrin-2 dehydrogenase / sirohydrochlorin ferrochelatase family. It in the C-terminal section; belongs to the precorrin methyltransferase family.

The catalysed reaction is uroporphyrinogen III + 2 S-adenosyl-L-methionine = precorrin-2 + 2 S-adenosyl-L-homocysteine + H(+). The enzyme catalyses precorrin-2 + NAD(+) = sirohydrochlorin + NADH + 2 H(+). It catalyses the reaction siroheme + 2 H(+) = sirohydrochlorin + Fe(2+). Its pathway is cofactor biosynthesis; adenosylcobalamin biosynthesis; precorrin-2 from uroporphyrinogen III: step 1/1. The protein operates within cofactor biosynthesis; adenosylcobalamin biosynthesis; sirohydrochlorin from precorrin-2: step 1/1. It participates in porphyrin-containing compound metabolism; siroheme biosynthesis; precorrin-2 from uroporphyrinogen III: step 1/1. It functions in the pathway porphyrin-containing compound metabolism; siroheme biosynthesis; siroheme from sirohydrochlorin: step 1/1. Its pathway is porphyrin-containing compound metabolism; siroheme biosynthesis; sirohydrochlorin from precorrin-2: step 1/1. Its function is as follows. Multifunctional enzyme that catalyzes the SAM-dependent methylations of uroporphyrinogen III at position C-2 and C-7 to form precorrin-2 via precorrin-1. Then it catalyzes the NAD-dependent ring dehydrogenation of precorrin-2 to yield sirohydrochlorin. Finally, it catalyzes the ferrochelation of sirohydrochlorin to yield siroheme. The sequence is that of Siroheme synthase from Psychrobacter cryohalolentis (strain ATCC BAA-1226 / DSM 17306 / VKM B-2378 / K5).